The chain runs to 294 residues: Acetylglutamate kinase (294 aa).

Substrate contacts are provided by residues 63–64, Arg85, and Asn188; that span reads GG.

Belongs to the acetylglutamate kinase family. ArgB subfamily.

The protein resides in the cytoplasm. It catalyses the reaction N-acetyl-L-glutamate + ATP = N-acetyl-L-glutamyl 5-phosphate + ADP. It participates in amino-acid biosynthesis; L-arginine biosynthesis; N(2)-acetyl-L-ornithine from L-glutamate: step 2/4. In terms of biological role, catalyzes the ATP-dependent phosphorylation of N-acetyl-L-glutamate. The polypeptide is Acetylglutamate kinase (Methanococcus maripaludis (strain C7 / ATCC BAA-1331)).